A 305-amino-acid polypeptide reads, in one-letter code: RNA-binding protein rnp-1 (305 aa).

One can recognise an RRM domain in the interval 3–72; sequence SKLFVGNLPD…KVVNIKKSTS (70 aa). The CCHC-type zinc-finger motif lies at 84–97; the sequence is CFRCQSDEHRTPQC. The tract at residues 284 to 305 is disordered; sequence QQIQHQQATGSPAPVPAPPRLY. Residues 296–305 are compositionally biased toward pro residues; the sequence is APVPAPPRLY.

In terms of tissue distribution, expressed throughout the germline.

In terms of biological role, RNA-binding protein that is required for the germ line to transition from spermatogenesis to oogenesis and allow for normal oocyte development. This Caenorhabditis elegans protein is RNA-binding protein rnp-1.